Here is a 284-residue protein sequence, read N- to C-terminus: MGVESVRCPLHFTKMQGAGNDFVVLDLRDGTPPPDVALVAWLADRHFGIGCDQVIAIEPPRGVGVFAAYRIWNADGSAAQQCGNGARCVAAWLVRDGSVADEHFLIDSPVQAHLVRCIGKDEYAVEMGLPVFEPERIPLSGFPNACGEYVLSLQGEVLRCGAVSMGNPHAVVEVDLIDVAPVERIGSLLQQHVAFPESVNVGFVQVIDPGLVRLRVYERGAGETLACGSGACAAAVVLMQRGRVGRDVRVVLPGGTLRVQWPVSGGPVTLSGPAKCVFDGVWYG.

Substrate is bound by residues N20, Q53, and N73. C82 serves as the catalytic Proton donor. Residues 83 to 84 (GN), N167, N200, and 218 to 219 (ER) contribute to the substrate site. The active-site Proton acceptor is the C227. 228–229 (GS) lines the substrate pocket.

The protein belongs to the diaminopimelate epimerase family. Homodimer.

The protein localises to the cytoplasm. It carries out the reaction (2S,6S)-2,6-diaminopimelate = meso-2,6-diaminopimelate. It functions in the pathway amino-acid biosynthesis; L-lysine biosynthesis via DAP pathway; DL-2,6-diaminopimelate from LL-2,6-diaminopimelate: step 1/1. Functionally, catalyzes the stereoinversion of LL-2,6-diaminopimelate (L,L-DAP) to meso-diaminopimelate (meso-DAP), a precursor of L-lysine and an essential component of the bacterial peptidoglycan. This Xylella fastidiosa (strain 9a5c) protein is Diaminopimelate epimerase.